Consider the following 2368-residue polypeptide: Highly reducing polyketide synthase cla2 (2368 aa).

Residues 10–434 (QIPIAIVGLG…GTNGLVVLEA (425 aa)) enclose the Ketosynthase family 3 (KS3) domain. Catalysis depends on for beta-ketoacyl synthase activity residues cysteine 182, histidine 317, and histidine 357. The tract at residues 548–877 (FVFTGQGAQW…RGQNALDTSL (330 aa)) is malonyl-CoA:ACP transacylase (MAT) domain. The active-site For malonyltransferase activity is serine 638. Residues 936 to 1071 (HSMIGLKQPM…GLVAIEYTNK (136 aa)) form an N-terminal hotdog fold region. The dehydratase (DH) domain stretch occupies residues 936–1175 (HSMIGLKQPM…AIFQSIFGST (240 aa)). The PKS/mFAS DH domain maps to 936-1255 (HSMIGLKQPM…MTEPEVGDDA (320 aa)). Histidine 968 serves as the catalytic Proton acceptor; for dehydratase activity. The tract at residues 1099–1255 (PLMIRREKFY…MTEPEVGDDA (157 aa)) is C-terminal hotdog fold. Aspartate 1165 acts as the Proton donor; for dehydratase activity in catalysis. An enoylreductase (ER) domain region spans residues 1655 to 1967 (GFLDSLQFIK…QGKHRGKLVL (313 aa)). The segment at 1991–2170 (ATYLIIGGLG…AVAVNLTIIR (180 aa)) is catalytic ketoreductase (KRc) domain. The Carrier domain occupies 2283–2360 (QASEIITEGL…VLAKTIASRS (78 aa)). Serine 2320 carries the post-translational modification O-(pantetheine 4'-phosphoryl)serine.

It participates in secondary metabolite biosynthesis. Functionally, highly reducing polyketide synthase; part of the gene cluster that mediates the biosynthesis of cladosporin, a tricyclic octaketide that acts as an antimalarial agent though inhibition of the Plasmodium falciparum lysyl-tRNA synthetase. The highly reducing polyketide synthase cla2 is responsible for biosynthesis up to the pentaketide stage, including of the tetrahydropyran (THP) ring, whereas the three subsequent ketide extensions with no reduction are catalyzed by the non-reducing polyketide synthase cla3. The polypeptide is Highly reducing polyketide synthase cla2 (Cladosporium cladosporioides).